Here is a 137-residue protein sequence, read N- to C-terminus: MSQRTLVLLKPDAVRRGLTGEIISRIERKAGWAITALELRTLDQDTLEQHYGEHKGKPFYEPLVEFMASGPVVALVVEGERVIEGVRALAGPTDPIAAAPGSIRGDYGVIVRENLIHASDSEESAERELKIFFPGRV.

ATP-binding residues include Lys-10, Phe-59, Arg-87, Thr-93, Arg-104, and Asn-114. The Pros-phosphohistidine intermediate role is filled by His-117.

It belongs to the NDK family. Homotetramer. Requires Mg(2+) as cofactor.

The protein resides in the cytoplasm. The enzyme catalyses a 2'-deoxyribonucleoside 5'-diphosphate + ATP = a 2'-deoxyribonucleoside 5'-triphosphate + ADP. The catalysed reaction is a ribonucleoside 5'-diphosphate + ATP = a ribonucleoside 5'-triphosphate + ADP. Major role in the synthesis of nucleoside triphosphates other than ATP. The ATP gamma phosphate is transferred to the NDP beta phosphate via a ping-pong mechanism, using a phosphorylated active-site intermediate. This chain is Nucleoside diphosphate kinase, found in Streptomyces avermitilis (strain ATCC 31267 / DSM 46492 / JCM 5070 / NBRC 14893 / NCIMB 12804 / NRRL 8165 / MA-4680).